A 453-amino-acid polypeptide reads, in one-letter code: Ribosomal protein uS12 methylthiotransferase RimO (453 aa).

Residues 5-120 (PKVGFVSLGC…VMQAVHSHLP (116 aa)) form the MTTase N-terminal domain. The [4Fe-4S] cluster site is built by cysteine 14, cysteine 50, cysteine 79, cysteine 151, cysteine 155, and cysteine 158. The Radical SAM core domain occupies 137–382 (LTPRHYAYLK…MEVAEEVSAR (246 aa)). The region spanning 385–453 (ARKVGKTLKV…ADGHDLWGEV (69 aa)) is the TRAM domain.

Belongs to the methylthiotransferase family. RimO subfamily. [4Fe-4S] cluster is required as a cofactor.

The protein resides in the cytoplasm. It catalyses the reaction L-aspartate(89)-[ribosomal protein uS12]-hydrogen + (sulfur carrier)-SH + AH2 + 2 S-adenosyl-L-methionine = 3-methylsulfanyl-L-aspartate(89)-[ribosomal protein uS12]-hydrogen + (sulfur carrier)-H + 5'-deoxyadenosine + L-methionine + A + S-adenosyl-L-homocysteine + 2 H(+). Catalyzes the methylthiolation of an aspartic acid residue of ribosomal protein uS12. This is Ribosomal protein uS12 methylthiotransferase RimO from Burkholderia multivorans (strain ATCC 17616 / 249).